Here is a 695-residue protein sequence, read N- to C-terminus: Pentatricopeptide repeat-containing protein 1, mitochondrial (695 aa).

PPR repeat units lie at residues 133–169, 170–204, 205–243, 244–278, 279–315, and 316–352; these read TQYWYFFQCKRLIKEGKLAEALDLFERQMLKEERLQP, LECNYTVLIGGCGRVGYLKKAFRLFNDMKKRDLEP, SDATYTALFNVCAESPWKDSALQSALKLRQQLQARNFQL, NLKTYHALLKVAAKCADLRLCLDVFKEIIQRGHAV, TEETFCFLLVGCIQDKKTGFRQAMQVWRQMLSLGIKP, and SRHGYNLLLEAARDCGLGDPEVASRLLLTSQEETILL. Residues 391 to 416 form a disordered region; it reads QKLEGPPALPEARVTSRTQPEVETTA. PPR repeat units follow at residues 470-485, 517-551, 552-583, and 584-618; these read EGFLGKMTEHGLQPDI, DVTFFNTLIRKKSKLGDLEGAKALLPILAKKGIVP, NLRTFCNLAIGCHRPRDGMQLLADMKKSQVSP, and NIHIYSTLINAALKKLDYTYLISILKDMRQNSVPV. Positions 672 to 695 are disordered; that stretch reads WQEFQNKPVGDQDTTDKAGGLRDG. The span at 685–695 shows a compositional bias: basic and acidic residues; the sequence is TTDKAGGLRDG.

This sequence belongs to the PTCD1 family. In terms of assembly, associates with mitochondrial leucine tRNAs. Interacts with ELAC2.

Its subcellular location is the mitochondrion. The protein localises to the mitochondrion matrix. In terms of biological role, mitochondrial protein implicated in negative regulation of leucine tRNA levels, as well as negative regulation of mitochondria-encoded proteins and COX activity. Also affects the 3'-processing of mitochondrial tRNAs. In Mus musculus (Mouse), this protein is Pentatricopeptide repeat-containing protein 1, mitochondrial (Ptcd1).